Here is a 241-residue protein sequence, read N- to C-terminus: Folate receptor alpha (241 aa).

The signal sequence occupies residues Met-1 to Gly-19. Intrachain disulfides connect Cys-36–Cys-64, Cys-56–Cys-104, Cys-65–Cys-108, Cys-88–Cys-174, Cys-95–Cys-145, Cys-134–Cys-208, Cys-138–Cys-188, and Cys-151–Cys-168. N-linked (GlcNAc...) asparagine glycosylation occurs at Asn-68. Folate-binding positions include Asp-102, Tyr-106, Trp-123–Arg-127, His-156–Trp-161, and Ser-195. A glycan (N-linked (GlcNAc...) asparagine) is linked at Asn-160. Ser-234 carries the GPI-anchor amidated serine lipid modification. The propeptide at Gly-235 to Ile-241 is removed in mature form.

Belongs to the folate receptor family. In terms of processing, the secreted form is derived from the membrane-bound form either by cleavage of the GPI anchor, or/and by proteolysis catalyzed by a metalloprotease. As to expression, detected in milk (at protein level).

It localises to the cell membrane. It is found in the apical cell membrane. Its subcellular location is the basolateral cell membrane. The protein localises to the secreted. The protein resides in the cytoplasmic vesicle. It localises to the clathrin-coated vesicle. It is found in the endosome. Its function is as follows. Binds to folate and reduced folic acid derivatives and mediates delivery of 5-methyltetrahydrofolate and folate analogs into the interior of cells. Has high affinity for folate and folic acid analogs at neutral pH. Exposure to slightly acidic pH after receptor endocytosis triggers a conformation change that strongly reduces its affinity for folates and mediates their release. Required for normal embryonic development and normal cell proliferation. This chain is Folate receptor alpha (FOLR1), found in Bos taurus (Bovine).